The following is a 1124-amino-acid chain: tRNA (34-2'-O)-methyltransferase regulator WDR6 (1124 aa).

An N-acetylmethionine modification is found at Met1. WD repeat units follow at residues 53–97 (MKRV…IVKI), 105–143 (RELWRSGLWNMSDWIWDARWLEGNIALALGHNSVVLYDP), 147–189 (CSLQ…VWYP), 200–238 (VPDRRVSGHVGVIFSMSYLESKGLLATASEDRSVRIWKV), 247–285 (RVQNIGHCFGHSARVWQVKLLENYLISAGEDCVCLVWSH), 289–327 (ILQAFRGHQGRGIRALAAHERQAWVITGGDDSGIRLWHL), 335–376 (SGVF…LYDL), 381–422 (WEQL…VVPI), 425–470 (PTAA…ISAA), 476–520 (IFVK…LYPS), 557–596 (PMSTLPSLHGKQGVTSVTCHGGYVYTTGRDGSYYQLFVRG), 602–640 (VLRQKPCRGMNWVAGVRMVADGNMVILGFHANEFVVWSP), 643–682 (HEKLHIINCGGGHRSWAFSDTEAAMAFAYLKDGDVMLYRA), 743–789 (LIDI…VWGV), 852–897 (RHRH…LFLL), 905–950 (QLLA…FWDL), 974–1015 (GSPC…VFVL), 1039–1076 (EEYSVPCAHAAHVTGLKILSRSLMVSASIDQRLTFWRL), and 1082–1124 (TFMN…NWYD).

It belongs to the WD repeat WDR6 family. In terms of assembly, interacts with FTSJ1; the interaction is direct, and required for 2'-O-methylation of position 34 in substrate tRNAs. Interacts with IRS4. Interacts with STK11/LKB1.

It localises to the cytoplasm. Its function is as follows. Together with methyltransferase FTSJ1, methylates the 2'-O-ribose of nucleotides at position 34 of the tRNA anticodon loop of substrate tRNAs. Required for the correct positioning of the substrate tRNA for methylation. Required to suppress amino acid starvation-induced autophagy. Enhances the STK11/LKB1-induced cell growth suppression activity. The chain is tRNA (34-2'-O)-methyltransferase regulator WDR6 (WDR6) from Bos taurus (Bovine).